Consider the following 493-residue polypeptide: Glutamyl-tRNA(Gln) amidotransferase subunit A (493 aa).

Active-site charge relay system residues include lysine 79 and serine 159. Serine 183 serves as the catalytic Acyl-ester intermediate.

Belongs to the amidase family. GatA subfamily. As to quaternary structure, heterotrimer of A, B and C subunits.

The catalysed reaction is L-glutamyl-tRNA(Gln) + L-glutamine + ATP + H2O = L-glutaminyl-tRNA(Gln) + L-glutamate + ADP + phosphate + H(+). Functionally, allows the formation of correctly charged Gln-tRNA(Gln) through the transamidation of misacylated Glu-tRNA(Gln) in organisms which lack glutaminyl-tRNA synthetase. The reaction takes place in the presence of glutamine and ATP through an activated gamma-phospho-Glu-tRNA(Gln). This Chelativorans sp. (strain BNC1) protein is Glutamyl-tRNA(Gln) amidotransferase subunit A.